A 133-amino-acid polypeptide reads, in one-letter code: Large ribosomal subunit protein bL12 (133 aa).

The disordered stretch occupies residues 98 to 118 (DMVESTPKPIKEGTGKEDAED).

The protein belongs to the bacterial ribosomal protein bL12 family. In terms of assembly, homodimer. Part of the ribosomal stalk of the 50S ribosomal subunit. Forms a multimeric L10(L12)X complex, where L10 forms an elongated spine to which 2 to 4 L12 dimers bind in a sequential fashion. Binds GTP-bound translation factors.

In terms of biological role, forms part of the ribosomal stalk which helps the ribosome interact with GTP-bound translation factors. Is thus essential for accurate translation. The protein is Large ribosomal subunit protein bL12 of Crocosphaera subtropica (strain ATCC 51142 / BH68) (Cyanothece sp. (strain ATCC 51142)).